Consider the following 312-residue polypeptide: Aspartate carbamoyltransferase catalytic subunit (312 aa).

Carbamoyl phosphate contacts are provided by arginine 55 and threonine 56. Lysine 83 is an L-aspartate binding site. Residues arginine 105, histidine 133, and glutamine 136 each contribute to the carbamoyl phosphate site. The L-aspartate site is built by arginine 166 and arginine 220. Carbamoyl phosphate is bound by residues glycine 261 and proline 262.

The protein belongs to the aspartate/ornithine carbamoyltransferase superfamily. ATCase family. Heterododecamer (2C3:3R2) of six catalytic PyrB chains organized as two trimers (C3), and six regulatory PyrI chains organized as three dimers (R2).

The enzyme catalyses carbamoyl phosphate + L-aspartate = N-carbamoyl-L-aspartate + phosphate + H(+). Its pathway is pyrimidine metabolism; UMP biosynthesis via de novo pathway; (S)-dihydroorotate from bicarbonate: step 2/3. Its function is as follows. Catalyzes the condensation of carbamoyl phosphate and aspartate to form carbamoyl aspartate and inorganic phosphate, the committed step in the de novo pyrimidine nucleotide biosynthesis pathway. This Prosthecochloris aestuarii (strain DSM 271 / SK 413) protein is Aspartate carbamoyltransferase catalytic subunit.